The following is a 354-amino-acid chain: Holliday junction branch migration complex subunit RuvB (354 aa).

Polar residues predominate over residues methionine 1–asparagine 10. The interval methionine 1–arginine 36 is disordered. A compositionally biased stretch (basic and acidic residues) spans lysine 12–arginine 36. The segment at proline 13–tyrosine 196 is large ATPase domain (RuvB-L). ATP-binding positions include isoleucine 35, arginine 36, glycine 77, lysine 80, threonine 81, threonine 82, glutamate 143–tyrosine 145, arginine 186, tyrosine 196, and arginine 233. Threonine 81 contributes to the Mg(2+) binding site. The interval glutamate 197–glutamine 267 is small ATPAse domain (RuvB-S). The segment at proline 270–glutamine 354 is head domain (RuvB-H). Arginine 325 and arginine 330 together coordinate DNA.

This sequence belongs to the RuvB family. Homohexamer. Forms an RuvA(8)-RuvB(12)-Holliday junction (HJ) complex. HJ DNA is sandwiched between 2 RuvA tetramers; dsDNA enters through RuvA and exits via RuvB. An RuvB hexamer assembles on each DNA strand where it exits the tetramer. Each RuvB hexamer is contacted by two RuvA subunits (via domain III) on 2 adjacent RuvB subunits; this complex drives branch migration. In the full resolvosome a probable DNA-RuvA(4)-RuvB(12)-RuvC(2) complex forms which resolves the HJ.

It localises to the cytoplasm. It catalyses the reaction ATP + H2O = ADP + phosphate + H(+). Functionally, the RuvA-RuvB-RuvC complex processes Holliday junction (HJ) DNA during genetic recombination and DNA repair, while the RuvA-RuvB complex plays an important role in the rescue of blocked DNA replication forks via replication fork reversal (RFR). RuvA specifically binds to HJ cruciform DNA, conferring on it an open structure. The RuvB hexamer acts as an ATP-dependent pump, pulling dsDNA into and through the RuvAB complex. RuvB forms 2 homohexamers on either side of HJ DNA bound by 1 or 2 RuvA tetramers; 4 subunits per hexamer contact DNA at a time. Coordinated motions by a converter formed by DNA-disengaged RuvB subunits stimulates ATP hydrolysis and nucleotide exchange. Immobilization of the converter enables RuvB to convert the ATP-contained energy into a lever motion, pulling 2 nucleotides of DNA out of the RuvA tetramer per ATP hydrolyzed, thus driving DNA branch migration. The RuvB motors rotate together with the DNA substrate, which together with the progressing nucleotide cycle form the mechanistic basis for DNA recombination by continuous HJ branch migration. Branch migration allows RuvC to scan DNA until it finds its consensus sequence, where it cleaves and resolves cruciform DNA. The polypeptide is Holliday junction branch migration complex subunit RuvB (Crocosphaera subtropica (strain ATCC 51142 / BH68) (Cyanothece sp. (strain ATCC 51142))).